The primary structure comprises 118 residues: UPF0102 protein DICTH_1420 (118 aa).

It belongs to the UPF0102 family.

The sequence is that of UPF0102 protein DICTH_1420 from Dictyoglomus thermophilum (strain ATCC 35947 / DSM 3960 / H-6-12).